Reading from the N-terminus, the 174-residue chain is Guided entry of tail-anchored proteins factor 1 (174 aa).

At 1–8 the chain is on the lumenal side; the sequence is MSASETDR. Residues 9 to 29 traverse the membrane as a helical segment; the sequence is WAWLLVLCFVFGCNVLRILLP. The Cytoplasmic segment spans residues 30–99; that stretch reads TLSSFISRVL…VKARTAQLAK (70 aa). The stretch at 39–94 forms a coiled coil; the sequence is LQKDAEQESQMRAEIQSMKQELSTVNMMDEFARYARLERKINKMTDKLKTHVKART. The tract at residues 39 to 97 is interaction with GET3/TRC40; that stretch reads LQKDAEQESQMRAEIQSMKQELSTVNMMDEFARYARLERKINKMTDKLKTHVKARTAQL. The helical transmembrane segment at 100–120 threads the bilayer; sequence IKWFISVAFYVLQAALMISLI. The Lumenal segment spans residues 121–148; that stretch reads WKYYSVPVAVVPSKWITPLDRLVAFPTR. A helical transmembrane segment spans residues 149–169; the sequence is VAGGIGVTCWILVCNKVVAII. The Cytoplasmic portion of the chain corresponds to 170-174; that stretch reads LHPFS.

The protein belongs to the WRB/GET1 family. Component of the Golgi to ER traffic (GET) complex, which is composed of GET1, CAMLG/GET2 and GET3. Within the complex, GET1 and CAMLG form a heterotetramer which is stabilized by phosphatidylinositol binding and which binds to the GET3 homodimer. Interacts with CAMLG/GET2 (via C-terminus). GET3 shows a higher affinity for CAMLG than for GET1.

Its subcellular location is the endoplasmic reticulum membrane. Required for the post-translational delivery of tail-anchored (TA) proteins to the endoplasmic reticulum. Together with CAMLG/GET2, acts as a membrane receptor for soluble GET3/TRC40, which recognizes and selectively binds the transmembrane domain of TA proteins in the cytosol. Required to ensure correct topology and ER insertion of CAMLG. This is Guided entry of tail-anchored proteins factor 1 from Rattus norvegicus (Rat).